Here is a 319-residue protein sequence, read N- to C-terminus: Probable cytochrome c oxidase subunit 2 (319 aa).

The N-terminal stretch at 1–33 (MSPNGSDRSPRRPMRRKLLQALTAGLVLATATG) is a signal peptide. The next 2 membrane-spanning stretches (helical) occupy residues 63 to 83 (WAAALATGVLVWGLILWATIF) and 101 to 121 (MPIEALYTVVPLIIVSVLFYF). Cu cation-binding residues include His227, Cys262, Cys266, and His270.

Belongs to the cytochrome c oxidase subunit 2 family. The cofactor is Cu cation. Heme serves as cofactor.

It is found in the cell membrane. It catalyses the reaction 4 Fe(II)-[cytochrome c] + O2 + 8 H(+)(in) = 4 Fe(III)-[cytochrome c] + 2 H2O + 4 H(+)(out). Subunits I and II form the functional core of the enzyme complex. Electrons originating in cytochrome c are transferred via heme a and Cu(A) to the binuclear center formed by heme a3 and Cu(B). The sequence is that of Probable cytochrome c oxidase subunit 2 (ctaC) from Streptomyces avermitilis (strain ATCC 31267 / DSM 46492 / JCM 5070 / NBRC 14893 / NCIMB 12804 / NRRL 8165 / MA-4680).